A 503-amino-acid chain; its full sequence is Aspartyl/glutamyl-tRNA(Asn/Gln) amidotransferase subunit B (503 aa).

Belongs to the GatB/GatE family. GatB subfamily. Heterotrimer of A, B and C subunits.

It catalyses the reaction L-glutamyl-tRNA(Gln) + L-glutamine + ATP + H2O = L-glutaminyl-tRNA(Gln) + L-glutamate + ADP + phosphate + H(+). It carries out the reaction L-aspartyl-tRNA(Asn) + L-glutamine + ATP + H2O = L-asparaginyl-tRNA(Asn) + L-glutamate + ADP + phosphate + 2 H(+). Functionally, allows the formation of correctly charged Asn-tRNA(Asn) or Gln-tRNA(Gln) through the transamidation of misacylated Asp-tRNA(Asn) or Glu-tRNA(Gln) in organisms which lack either or both of asparaginyl-tRNA or glutaminyl-tRNA synthetases. The reaction takes place in the presence of glutamine and ATP through an activated phospho-Asp-tRNA(Asn) or phospho-Glu-tRNA(Gln). The polypeptide is Aspartyl/glutamyl-tRNA(Asn/Gln) amidotransferase subunit B (Cereibacter sphaeroides (strain ATCC 17025 / ATH 2.4.3) (Rhodobacter sphaeroides)).